We begin with the raw amino-acid sequence, 103 residues long: Large ribosomal subunit protein uL24 (103 aa).

Belongs to the universal ribosomal protein uL24 family. As to quaternary structure, part of the 50S ribosomal subunit.

In terms of biological role, one of two assembly initiator proteins, it binds directly to the 5'-end of the 23S rRNA, where it nucleates assembly of the 50S subunit. Functionally, one of the proteins that surrounds the polypeptide exit tunnel on the outside of the subunit. This chain is Large ribosomal subunit protein uL24, found in Agathobacter rectalis (strain ATCC 33656 / DSM 3377 / JCM 17463 / KCTC 5835 / VPI 0990) (Eubacterium rectale).